A 256-amino-acid chain; its full sequence is Trans-aconitate 2-methyltransferase (256 aa).

The protein belongs to the methyltransferase superfamily. Tam family.

The protein localises to the cytoplasm. The catalysed reaction is trans-aconitate + S-adenosyl-L-methionine = (E)-3-(methoxycarbonyl)pent-2-enedioate + S-adenosyl-L-homocysteine. Functionally, catalyzes the S-adenosylmethionine monomethyl esterification of trans-aconitate. The protein is Trans-aconitate 2-methyltransferase of Rhodopseudomonas palustris (strain BisA53).